Reading from the N-terminus, the 272-residue chain is MDHRTPTPDNPWLALRNLTPARIALGRTGTSLPTGAQLDFQFAHAQARDAVHLAFDHAGLASQLSDRGRESLVLHSAASDRHQYLQRPDLGRRLNEDSITTLRQHAQANPGGVDLAIVVADGLSALAVHRHTLPFLTRFDEQAAADGWTSAPVVLVQQGRVAVADEVGELLGARMTVMLIGERPGLSSPDSLGLYFTYAPKVGLTDAYRNCISNIRLEGLSYGMAAHRLLYLMREACRRQLSGVNLKDEAEVHSLENEDSASQKGNFLLGKE.

The adenosylcob(III)alamin site is built by Val161, Glu182, and Cys211.

Belongs to the EutC family. As to quaternary structure, the basic unit is a heterodimer which dimerizes to form tetramers. The heterotetramers trimerize; 6 large subunits form a core ring with 6 small subunits projecting outwards. It depends on adenosylcob(III)alamin as a cofactor.

Its subcellular location is the bacterial microcompartment. It carries out the reaction ethanolamine = acetaldehyde + NH4(+). The protein operates within amine and polyamine degradation; ethanolamine degradation. Catalyzes the deamination of various vicinal amino-alcohols to oxo compounds. Allows this organism to utilize ethanolamine as the sole source of nitrogen and carbon in the presence of external vitamin B12. The protein is Ethanolamine ammonia-lyase small subunit of Pseudomonas putida (strain ATCC 700007 / DSM 6899 / JCM 31910 / BCRC 17059 / LMG 24140 / F1).